Here is a 522-residue protein sequence, read N- to C-terminus: Probable cytosolic Fe-S cluster assembly factor narfl (522 aa).

Residues Cys26, Cys73, Cys76, Cys79, Cys205, Cys281, Cys439, and Cys443 each coordinate [4Fe-4S] cluster.

Belongs to the NARF family.

Its function is as follows. Component of the cytosolic iron-sulfur (Fe/S) protein assembly machinery. Required for maturation of extramitochondrial Fe/S proteins. This Dictyostelium discoideum (Social amoeba) protein is Probable cytosolic Fe-S cluster assembly factor narfl (narfl).